The following is a 318-amino-acid chain: tRNA uridine(34) hydroxylase (318 aa).

The Rhodanese domain occupies 123-217; that stretch reads EDDDTVIIDA…YGKDPETKGQ (95 aa). The active-site Cysteine persulfide intermediate is the cysteine 177.

Belongs to the TrhO family.

The catalysed reaction is uridine(34) in tRNA + AH2 + O2 = 5-hydroxyuridine(34) in tRNA + A + H2O. In terms of biological role, catalyzes oxygen-dependent 5-hydroxyuridine (ho5U) modification at position 34 in tRNAs. This Staphylococcus aureus (strain bovine RF122 / ET3-1) protein is tRNA uridine(34) hydroxylase.